The sequence spans 596 residues: Uptake hydrogenase large subunit (596 aa).

Positions 75, 78, 575, and 578 each coordinate Ni(2+).

This sequence belongs to the [NiFe]/[NiFeSe] hydrogenase large subunit family. Heterodimer of a large and a small subunit. It depends on Ni(2+) as a cofactor.

It localises to the cell membrane. It carries out the reaction H2 + A = AH2. Functionally, this enzyme recycles the H(2) produced by nitrogenase to increase the production of ATP and to protect nitrogenase against inhibition or damage by O(2) under carbon- or phosphate-limited conditions. The protein is Uptake hydrogenase large subunit (hupB) of Bradyrhizobium diazoefficiens (strain JCM 10833 / BCRC 13528 / IAM 13628 / NBRC 14792 / USDA 110).